We begin with the raw amino-acid sequence, 569 residues long: Putative potassium-transporting ATPase ATP-binding subunit (569 aa).

Transmembrane regions (helical) follow at residues 34 to 54 (PVMF…LAMV) and 58 to 78 (IAGS…TVLF). Catalysis depends on Asp194, which acts as the 4-aspartylphosphate intermediate. ATP is bound by residues Asp231, Glu235, 264–271 (FTAQSRMS), and Lys282. Asp405 and Asp409 together coordinate Mg(2+). 3 consecutive transmembrane segments (helical) span residues 475–495 (FAII…LNVM), 503–523 (AILS…PLAL), and 543–563 (IYGL…DVLL).

It belongs to the cation transport ATPase (P-type) (TC 3.A.3) family. Type IA subfamily. The system is composed of three essential subunits: KdpA, KdpB and KdpC.

The protein resides in the cell inner membrane. The enzyme catalyses K(+)(out) + ATP + H2O = K(+)(in) + ADP + phosphate + H(+). Functionally, part of the high-affinity ATP-driven potassium transport (or Kdp) system, which catalyzes the hydrolysis of ATP coupled with the electrogenic transport of potassium into the cytoplasm. This subunit is responsible for energy coupling to the transport system and for the release of the potassium ions to the cytoplasm. This Salmonella typhi protein is Putative potassium-transporting ATPase ATP-binding subunit.